Consider the following 139-residue polypeptide: Heat shock protein homolog C338.06c (139 aa).

The sHSP domain occupies 27 to 139 (AWLSCWGPAL…EFTTRIVEIQ (113 aa)).

It belongs to the small heat shock protein (HSP20) family.

The protein localises to the mitochondrion. The protein is Heat shock protein homolog C338.06c of Schizosaccharomyces pombe (strain 972 / ATCC 24843) (Fission yeast).